Consider the following 603-residue polypeptide: NADH-ubiquinone oxidoreductase chain 5 (603 aa).

14 consecutive transmembrane segments (helical) span residues 4-24 (YTSI…ATLV), 36-56 (VKTT…LYIF), 87-107 (MMFI…SLWY), 122-142 (LIFL…QLFI), 171-191 (AVLY…WFLL), 211-233 (LPLM…HPWL), 241-261 (TPVS…FLLI), 272-292 (LTQN…AMCA), 301-320 (IVAF…IGIN), 325-347 (AFLH…GSII), 370-390 (STSL…TGFY), 406-422 (AWAL…TSAY), 488-508 (LLAL…TLMT), and 583-603 (MIKL…LLMV).

It belongs to the complex I subunit 5 family. As to quaternary structure, core subunit of respiratory chain NADH dehydrogenase (Complex I) which is composed of 45 different subunits.

The protein resides in the mitochondrion inner membrane. It catalyses the reaction a ubiquinone + NADH + 5 H(+)(in) = a ubiquinol + NAD(+) + 4 H(+)(out). In terms of biological role, core subunit of the mitochondrial membrane respiratory chain NADH dehydrogenase (Complex I) which catalyzes electron transfer from NADH through the respiratory chain, using ubiquinone as an electron acceptor. Essential for the catalytic activity and assembly of complex I. This is NADH-ubiquinone oxidoreductase chain 5 (MT-ND5) from Papio hamadryas (Hamadryas baboon).